The primary structure comprises 478 residues: Solute carrier family 2, facilitated glucose transporter member 8 (478 aa).

Residues 1–20 (MTPEDQEETQPLLRPPGGSA) form a disordered region. Residues 1-25 (MTPEDQEETQPLLRPPGGSAPRGRR) lie on the Cytoplasmic side of the membrane. Over residues 11–20 (PLLRPPGGSA) the composition is skewed to low complexity. The Dileucine internalization motif signature appears at 12–13 (LL). A helical membrane pass occupies residues 26–46 (VFLAAFAAALGPLSFGFALGY). Residues 47-70 (SSPAIPSLRRAAPPAPHLDEDAAS) lie on the Extracellular side of the membrane. Residues 71-91 (WFGAIVTLGAAAGGVLGGWLL) form a helical membrane-spanning segment. Residues 92 to 97 (DRAGRK) lie on the Cytoplasmic side of the membrane. The helical transmembrane segment at 98–118 (LSLVLCALPFVAGFAVITAAQ) threads the bilayer. Topologically, residues 119–127 (NLWMLLGGR) are extracellular. Residues 128–148 (LLTGLACGIASLVAPVYISEI) form a helical membrane-spanning segment. Residues 149 to 158 (AYPEVRGLLG) are Cytoplasmic-facing. Residues 159–179 (SCVQLMVVTGILLAYLAGWVL) traverse the membrane as a helical segment. Q162 contacts D-glucose. Over 180-182 (EWR) the chain is Extracellular. The chain crosses the membrane as a helical span at residues 183-203 (WLAVLGCVPPSFMLLLMCFMP). The Cytoplasmic portion of the chain corresponds to 204 to 257 (ETPRFLLSQHKHQEAMAAMQFLWGYAQGWEEPPLGAQHQDFHVAQLRRPGVYKP). The chain crosses the membrane as a helical span at residues 258–278 (FIIGISLMAFQQLSGVNAVMF). D-glucose contacts are provided by residues 268-269 (QQ) and N274. The Extracellular portion of the chain corresponds to 279–293 (YAETIFEEAKFKDSS). A helical membrane pass occupies residues 294–314 (LASVVVGVIQVLFTATAALIM). Residues 315–320 (DRAGRR) lie on the Cytoplasmic side of the membrane. A helical membrane pass occupies residues 321–341 (LLLTLSGVVMVFSTSAFGTYF). At 342-368 (KLTEGGPSNSSHVDLPALVSMEAADTN) the chain is on the extracellular side. Residue N350 is glycosylated (N-linked (GlcNAc...) asparagine). The chain crosses the membrane as a helical span at residues 369-389 (VGLAWLAVGSMCLFIAGFAVG). Residues 390–405 (WGPIPWLLMSEIFPLH) lie on the Cytoplasmic side of the membrane. A D-glucose-binding site is contributed by W395. The chain crosses the membrane as a helical span at residues 406–426 (VKGVATGVCVLTNWFMAFLVT). The Extracellular portion of the chain corresponds to 427-439 (KEFSSLMEVLRPY). The helical transmembrane segment at 440–460 (GAFWLASAFCIFGVLFTLACV) threads the bilayer. The Cytoplasmic portion of the chain corresponds to 461–478 (PETKGKTLEQITAHFEGR).

Belongs to the major facilitator superfamily. Sugar transporter (TC 2.A.1.1) family. Glucose transporter subfamily. Interacts with AP2B1. Abundantly expressed in testis and more moderately in lung, kidney, spleen, intestine, skeletal muscle, liver and mammary gland.

It is found in the cell membrane. The protein localises to the cytoplasmic vesicle membrane. It carries out the reaction D-glucose(out) = D-glucose(in). The enzyme catalyses D-fructose(out) = D-fructose(in). It catalyses the reaction L-dehydroascorbate(out) = L-dehydroascorbate(in). The catalysed reaction is alpha,alpha-trehalose(in) = alpha,alpha-trehalose(out). With respect to regulation, inhibited by cytochalasin B. Functionally, insulin-regulated facilitative hexose transporter that mediates the transport of glucose and fructose. Facilitates hepatic influx of dietary trehalose, which in turn inhibits glucose and fructose influx triggering a starvation signal and hepatic autophagy through activation of AMPK and ULK1. Also able to mediate the transport of dehydroascorbate. This is Solute carrier family 2, facilitated glucose transporter member 8 from Bos taurus (Bovine).